The primary structure comprises 282 residues: Acyl-CoA-binding domain-containing protein 6 (282 aa).

Residues 1–34 form a disordered region; it reads MATPFLPAGATTGDSGGELSSGDDSGDLESFQTP. Ser41 carries the post-translational modification Phosphoserine. The ACB domain maps to 42-127; the sequence is LAELFEKAAA…VKKLDPGWNP (86 aa). Residues 69–73 and Lys95 contribute to the an acyl-CoA site; that span reads YARYK. Ser106 carries the post-translational modification Phosphoserine. Residue Tyr114 participates in an acyl-CoA binding. 2 ANK repeats span residues 191–220 and 224–253; these read EGRA…GINC and EGQT…DPTL.

Monomer.

The protein resides in the cytoplasm. Its subcellular location is the nucleus. Binds long-chain acyl-coenzyme A molecules with a strong preference for unsaturated C18:1-CoA, lower affinity for unsaturated C20:4-CoA, and very weak affinity for saturated C16:0-CoA. Does not bind fatty acids. Plays a role in protein N-myristoylation. This is Acyl-CoA-binding domain-containing protein 6 (Acbd6) from Rattus norvegicus (Rat).